Reading from the N-terminus, the 553-residue chain is MNIIDQVKQTLIEEIEASIRKANLAEDIPEIKIEIPKDTKNGDYSSNIAMVLTKIAKRNPREIAQAIVDHLDTSKAHVKQVDIAGPGFINFYLDNQYLTDIIPEAITKGDRFGYATQSKNTNILLEYVSANPTGDLHIGHARNAAVGDSLANILIAAGYNVTREYYINDAGNQITNLARSIEARYFEALGDTSYEMPADGYNGKDIIEIGKDLAVKHPEIKDYSDEERLKTFRQLGVDYEMEKLKKDLSDFNVHFDNWFSETSLYENGAIKNTLSKMKELGYTYEADGATWLRTSDFKDDKDRVLIKKDGNYTYFTPDTAYHYNKINRGNDILIDLMGADHHGYINRLKASLETFGVDSDRLEIQIMQMVRLMQNGEEVKMSKRTGNAITLREIMDEVGIDAARYFLTMRSPDSHFDFDLELAKEQSQDNPIYYAQYAHARICSILKQAKEQGIEVSTDADFSKINNDKAIDLLKKVAEFESTIESAAEHRAPHRLTNYIQDLAAAFHKFYNAEKVLTDDTEKTKAHVAMIEAVRITLHNALALVGVTAPESM.

Residues 130–140 carry the 'HIGH' region motif; the sequence is ANPTGDLHIGH.

This sequence belongs to the class-I aminoacyl-tRNA synthetase family. In terms of assembly, monomer.

It is found in the cytoplasm. It carries out the reaction tRNA(Arg) + L-arginine + ATP = L-arginyl-tRNA(Arg) + AMP + diphosphate. The chain is Arginine--tRNA ligase from Staphylococcus epidermidis (strain ATCC 12228 / FDA PCI 1200).